A 461-amino-acid polypeptide reads, in one-letter code: Chromosomal replication initiator protein DnaA (461 aa).

The interval 1–90 is domain I, interacts with DnaA modulators; sequence MAVSLWQQCI…RPSARPVAPA (90 aa). The segment at 91–124 is domain II; the sequence is PVAAKPVNRQTKAQVGTTSFNTQAEPIINPNHRS. Positions 125–341 are domain III, AAA+ region; sequence NINPTYQFDN…GALNRVIANA (217 aa). ATP is bound by residues Gly-169, Gly-171, Lys-172, and Thr-173. A domain IV, binds dsDNA region spans residues 342 to 461; the sequence is NFTGRPITID…YANLIRTLSS (120 aa).

This sequence belongs to the DnaA family. Oligomerizes as a right-handed, spiral filament on DNA at oriC.

Its subcellular location is the cytoplasm. Plays an essential role in the initiation and regulation of chromosomal replication. ATP-DnaA binds to the origin of replication (oriC) to initiate formation of the DNA replication initiation complex once per cell cycle. Binds the DnaA box (a 9 base pair repeat at the origin) and separates the double-stranded (ds)DNA. Forms a right-handed helical filament on oriC DNA; dsDNA binds to the exterior of the filament while single-stranded (ss)DNA is stabiized in the filament's interior. The ATP-DnaA-oriC complex binds and stabilizes one strand of the AT-rich DNA unwinding element (DUE), permitting loading of DNA polymerase. After initiation quickly degrades to an ADP-DnaA complex that is not apt for DNA replication. Binds acidic phospholipids. The chain is Chromosomal replication initiator protein DnaA from Shewanella frigidimarina (strain NCIMB 400).